A 397-amino-acid chain; its full sequence is Metal tolerance protein 4 (397 aa).

The segment covering 1-19 (MEAKGENDARAPLLAERRR) has biased composition (basic and acidic residues). Residues 1–27 (MEAKGENDARAPLLAERRRNSVGSMRG) are disordered. The Cytoplasmic portion of the chain corresponds to 1-104 (MEAKGENDAR…EQKQSEFAMK (104 aa)). The chain crosses the membrane as a helical span at residues 105–122 (ISNYANMILLALKIYATI). Topologically, residues 123-126 (KSGS) are vacuolar. The chain crosses the membrane as a helical span at residues 127–147 (IAIAASTLDSLLDLMAGGILW). The Cytoplasmic portion of the chain corresponds to 148–170 (FTHLSMKSINVYKYPIGKLRVQP). Residues 171–191 (VGIIIFAAVMATLGFQVFVQA) form a helical membrane-spanning segment. Residues 192-208 (VEKLIVNETPDKLTPVQ) lie on the Vacuolar side of the membrane. Residues 209–229 (LTWLYSIMIFATVVKLALWLY) form a helical membrane-spanning segment. Residues 230-248 (CRTSGNKIVRAYAKDHYFD) lie on the Cytoplasmic side of the membrane. A helical transmembrane segment spans residues 249–269 (VVTNVVGLAAAVLGDMFYWWI). D270 is a topological domain (vacuolar). A helical membrane pass occupies residues 271–291 (PVGAIALAVYTITNWSGTVWE). The Cytoplasmic segment spans residues 292 to 397 (NAVSLVGESA…ILSKLPSSQP (106 aa)).

The protein belongs to the cation diffusion facilitator (CDF) transporter (TC 2.A.4) family. SLC30A subfamily.

It localises to the vacuole membrane. In terms of biological role, involved in sequestration of excess metal in the cytoplasm into vacuoles to maintain metal homeostasis. In Oryza sativa subsp. japonica (Rice), this protein is Metal tolerance protein 4 (MTP4).